Reading from the N-terminus, the 361-residue chain is Phosphoserine aminotransferase (361 aa).

Residues S9 and R42 each coordinate L-glutamate. Pyridoxal 5'-phosphate-binding positions include 76-77 (AR), W102, T153, D173, and Q196. An N6-(pyridoxal phosphate)lysine modification is found at K197. Residue 238–239 (NT) participates in pyridoxal 5'-phosphate binding.

It belongs to the class-V pyridoxal-phosphate-dependent aminotransferase family. SerC subfamily. Homodimer. The cofactor is pyridoxal 5'-phosphate.

The protein localises to the cytoplasm. The enzyme catalyses O-phospho-L-serine + 2-oxoglutarate = 3-phosphooxypyruvate + L-glutamate. The catalysed reaction is 4-(phosphooxy)-L-threonine + 2-oxoglutarate = (R)-3-hydroxy-2-oxo-4-phosphooxybutanoate + L-glutamate. It functions in the pathway amino-acid biosynthesis; L-serine biosynthesis; L-serine from 3-phospho-D-glycerate: step 2/3. The protein operates within cofactor biosynthesis; pyridoxine 5'-phosphate biosynthesis; pyridoxine 5'-phosphate from D-erythrose 4-phosphate: step 3/5. Catalyzes the reversible conversion of 3-phosphohydroxypyruvate to phosphoserine and of 3-hydroxy-2-oxo-4-phosphonooxybutanoate to phosphohydroxythreonine. The protein is Phosphoserine aminotransferase of Erwinia tasmaniensis (strain DSM 17950 / CFBP 7177 / CIP 109463 / NCPPB 4357 / Et1/99).